Reading from the N-terminus, the 361-residue chain is S-adenosylmethionine:tRNA ribosyltransferase-isomerase (361 aa).

This sequence belongs to the QueA family. Monomer.

The protein localises to the cytoplasm. It carries out the reaction 7-aminomethyl-7-carbaguanosine(34) in tRNA + S-adenosyl-L-methionine = epoxyqueuosine(34) in tRNA + adenine + L-methionine + 2 H(+). Its pathway is tRNA modification; tRNA-queuosine biosynthesis. In terms of biological role, transfers and isomerizes the ribose moiety from AdoMet to the 7-aminomethyl group of 7-deazaguanine (preQ1-tRNA) to give epoxyqueuosine (oQ-tRNA). The sequence is that of S-adenosylmethionine:tRNA ribosyltransferase-isomerase from Glaesserella parasuis serovar 5 (strain SH0165) (Haemophilus parasuis).